The chain runs to 686 residues: Catalase-2 (686 aa).

Over residues 1–27 the composition is skewed to basic and acidic residues; the sequence is MSDDQNKRVNEHSKDEQLEQYRTDNSG. Positions 1–43 are disordered; that stretch reads MSDDQNKRVNEHSKDEQLEQYRTDNSGKKMTTNQGLRVSEDEH. Active-site residues include H78 and N151. Position 365 (Y365) interacts with heme.

It belongs to the catalase family. HPII subfamily. Heme serves as cofactor.

The enzyme catalyses 2 H2O2 = O2 + 2 H2O. Its function is as follows. Decomposes hydrogen peroxide into water and oxygen; serves to protect cells from the toxic effects of hydrogen peroxide. Involved in sporulation. This Bacillus subtilis (strain 168) protein is Catalase-2 (katE).